We begin with the raw amino-acid sequence, 211 residues long: Large ribosomal subunit protein bL25 (211 aa).

The segment at Ala188–Glu211 is disordered. Low complexity predominate over residues Ala201–Glu211.

It belongs to the bacterial ribosomal protein bL25 family. CTC subfamily. In terms of assembly, part of the 50S ribosomal subunit; part of the 5S rRNA/L5/L18/L25 subcomplex. Contacts the 5S rRNA. Binds to the 5S rRNA independently of L5 and L18.

Its function is as follows. This is one of the proteins that binds to the 5S RNA in the ribosome where it forms part of the central protuberance. In Colwellia psychrerythraea (strain 34H / ATCC BAA-681) (Vibrio psychroerythus), this protein is Large ribosomal subunit protein bL25.